The primary structure comprises 187 residues: MLGSSLRIFSPRAVSRLSFSTTSVEKAEKLWENPWKHALPEKSRSLATVEEAPIDWSYVERLMPIEVVPNVPEHEKYPTPSGWTPPTEAAKTHQYYIRRRHDHLLPLYLERKRDLLNEKTLDFDYVELVTIRNVDGDIFACENDLRSYLEEHLGHSIASHVDELKGRIKIKGAPRVLIEQFFYSKGF.

This sequence belongs to the mitochondrion-specific ribosomal protein mL49 family.

Its subcellular location is the mitochondrion. The sequence is that of Large ribosomal subunit protein mL49 (mrpl-49) from Caenorhabditis elegans.